The chain runs to 524 residues: Ribonuclease Y (524 aa).

A helical transmembrane segment spans residues 7–27 (LGGLLTGIVIAIIASIIASVI). One can recognise a KH domain in the interval 214 to 299 (TVSVVPLPND…EMVEKARKEV (86 aa)). One can recognise an HD domain in the interval 340–433 (VLSHSIEVAR…VQAADSISAA (94 aa)).

This sequence belongs to the RNase Y family.

It is found in the cell membrane. Endoribonuclease that initiates mRNA decay. This Acetivibrio thermocellus (strain ATCC 27405 / DSM 1237 / JCM 9322 / NBRC 103400 / NCIMB 10682 / NRRL B-4536 / VPI 7372) (Clostridium thermocellum) protein is Ribonuclease Y.